Reading from the N-terminus, the 301-residue chain is Tyrosine recombinase XerD (301 aa).

The region spanning 6-89 (PLHQQLIEQF…ALKVFFHFLK (84 aa)) is the Core-binding (CB) domain. The region spanning 108–293 (RLPSILSTEE…ASESIIEKFH (186 aa)) is the Tyr recombinase domain. Active-site residues include R152, K174, H245, R248, and H271. The active-site O-(3'-phospho-DNA)-tyrosine intermediate is Y280.

This sequence belongs to the 'phage' integrase family. XerD subfamily. Forms a cyclic heterotetrameric complex composed of two molecules of XerC and two molecules of XerD.

It localises to the cytoplasm. In terms of biological role, site-specific tyrosine recombinase, which acts by catalyzing the cutting and rejoining of the recombining DNA molecules. The XerC-XerD complex is essential to convert dimers of the bacterial chromosome into monomers to permit their segregation at cell division. It also contributes to the segregational stability of plasmids. The polypeptide is Tyrosine recombinase XerD (Chlamydia muridarum (strain MoPn / Nigg)).